A 323-amino-acid polypeptide reads, in one-letter code: Elongation factor P--(R)-beta-lysine ligase (323 aa).

A substrate-binding site is contributed by 74–76 (SPE). Residues 98 to 100 (RNE) and N107 contribute to the ATP site. A substrate-binding site is contributed by Y116. An ATP-binding site is contributed by 242 to 243 (EL). E249 is a binding site for substrate. G298 serves as a coordination point for ATP.

This sequence belongs to the class-II aminoacyl-tRNA synthetase family. EpmA subfamily. In terms of assembly, homodimer.

It catalyses the reaction D-beta-lysine + L-lysyl-[protein] + ATP = N(6)-((3R)-3,6-diaminohexanoyl)-L-lysyl-[protein] + AMP + diphosphate + H(+). Functionally, with EpmB is involved in the beta-lysylation step of the post-translational modification of translation elongation factor P (EF-P). Catalyzes the ATP-dependent activation of (R)-beta-lysine produced by EpmB, forming a lysyl-adenylate, from which the beta-lysyl moiety is then transferred to the epsilon-amino group of a conserved specific lysine residue in EF-P. The protein is Elongation factor P--(R)-beta-lysine ligase of Photobacterium profundum (strain SS9).